Here is a 254-residue protein sequence, read N- to C-terminus: UDP-2,3-diacylglucosamine hydrolase (254 aa).

Mn(2+) contacts are provided by aspartate 8, histidine 10, aspartate 41, asparagine 79, and histidine 114. Substrate is bound at residue 79-80 (NR). Substrate is bound by residues aspartate 122, serine 160, asparagine 164, lysine 167, and histidine 195. Positions 195 and 197 each coordinate Mn(2+).

This sequence belongs to the LpxH family. It depends on Mn(2+) as a cofactor.

Its subcellular location is the cell inner membrane. The catalysed reaction is UDP-2-N,3-O-bis[(3R)-3-hydroxytetradecanoyl]-alpha-D-glucosamine + H2O = 2-N,3-O-bis[(3R)-3-hydroxytetradecanoyl]-alpha-D-glucosaminyl 1-phosphate + UMP + 2 H(+). The protein operates within glycolipid biosynthesis; lipid IV(A) biosynthesis; lipid IV(A) from (3R)-3-hydroxytetradecanoyl-[acyl-carrier-protein] and UDP-N-acetyl-alpha-D-glucosamine: step 4/6. Hydrolyzes the pyrophosphate bond of UDP-2,3-diacylglucosamine to yield 2,3-diacylglucosamine 1-phosphate (lipid X) and UMP by catalyzing the attack of water at the alpha-P atom. Involved in the biosynthesis of lipid A, a phosphorylated glycolipid that anchors the lipopolysaccharide to the outer membrane of the cell. This is UDP-2,3-diacylglucosamine hydrolase from Aeromonas salmonicida (strain A449).